The chain runs to 485 residues: N-succinylglutamate 5-semialdehyde dehydrogenase (485 aa).

Residue 220–225 (GSANTG) participates in NAD(+) binding. Residues Glu243 and Cys278 contribute to the active site.

The protein belongs to the aldehyde dehydrogenase family. AstD subfamily.

The enzyme catalyses N-succinyl-L-glutamate 5-semialdehyde + NAD(+) + H2O = N-succinyl-L-glutamate + NADH + 2 H(+). It functions in the pathway amino-acid degradation; L-arginine degradation via AST pathway; L-glutamate and succinate from L-arginine: step 4/5. Functionally, catalyzes the NAD-dependent reduction of succinylglutamate semialdehyde into succinylglutamate. This is N-succinylglutamate 5-semialdehyde dehydrogenase from Aliivibrio fischeri (strain ATCC 700601 / ES114) (Vibrio fischeri).